The primary structure comprises 192 residues: Transmembrane protein 276 (192 aa).

The signal sequence occupies residues 1–32; that stretch reads MVSKPRNEWSTALSHLVLAGVSLHAAVSSVQS. The next 4 membrane-spanning stretches (helical) occupy residues 35–55, 63–83, 92–112, and 114–134; these read GAAA…APEL, AGAW…FHWV, LLLG…PEGC, and VAGQ…AVFT.

The protein resides in the membrane. This Rattus norvegicus (Rat) protein is Transmembrane protein 276.